A 182-amino-acid polypeptide reads, in one-letter code: Ribosome-recycling factor (182 aa).

The protein belongs to the RRF family.

It localises to the cytoplasm. Functionally, responsible for the release of ribosomes from messenger RNA at the termination of protein biosynthesis. May increase the efficiency of translation by recycling ribosomes from one round of translation to another. The chain is Ribosome-recycling factor from Prochlorococcus marinus (strain MIT 9313).